The chain runs to 148 residues: Sec-independent protein translocase protein TatB (148 aa).

Residues 1 to 21 (MFGISFSELLLVGLVALLVLG) traverse the membrane as a helical segment. Residues 85–148 (EPTPVEHVGE…NDTTQPPRAP (64 aa)) form a disordered region. Positions 107–148 (APAVAPTESAPVVAPASVEHVAQTAAPTTPAPNDTTQPPRAP) are enriched in low complexity.

It belongs to the TatB family. The Tat system comprises two distinct complexes: a TatABC complex, containing multiple copies of TatA, TatB and TatC subunits, and a separate TatA complex, containing only TatA subunits. Substrates initially bind to the TatABC complex, which probably triggers association of the separate TatA complex to form the active translocon.

Its subcellular location is the cell inner membrane. In terms of biological role, part of the twin-arginine translocation (Tat) system that transports large folded proteins containing a characteristic twin-arginine motif in their signal peptide across membranes. Together with TatC, TatB is part of a receptor directly interacting with Tat signal peptides. TatB may form an oligomeric binding site that transiently accommodates folded Tat precursor proteins before their translocation. In Pseudomonas fluorescens (strain Pf0-1), this protein is Sec-independent protein translocase protein TatB.